The primary structure comprises 207 residues: A disintegrin and metalloproteinase with thrombospondin motifs 5 (207 aa).

Positions 1–74 (HAAFTVAHEI…GHGNCLLDLP (74 aa)) constitute a Peptidase M12B domain. H8 is a binding site for Zn(2+). The active site involves E9. The Zn(2+) site is built by H12 and H18. 5 disulfides stabilise this stretch: C24–C53, C95–C117, C106–C127, C112–C146, and C140–C151. Residues 83-164 (ELPGQTYDAS…TKKKYYSTSS (82 aa)) enclose the Disintegrin domain. An N-linked (GlcNAc...) asparagine glycan is attached at N96. The TSP type-1 domain maps to 165–205 (HGNWGSWGSWGQCSRSCGGGVQFAYRHCNNPAPKNNGRYCT). W168 and W171 each carry a C-linked (Man) tryptophan glycan. The O-linked (Fuc...) serine glycan is linked to S180.

Requires Zn(2+) as cofactor. The precursor is cleaved by furin and PCSK7 outside of the cell. In terms of processing, glycosylated. Can be O-fucosylated by POFUT2 on a serine or a threonine residue found within the consensus sequence C1-X(2)-(S/T)-C2-G of the TSP type-1 repeat domains where C1 and C2 are the first and second cysteine residue of the repeat, respectively. Fucosylated repeats can then be further glycosylated by the addition of a beta-1,3-glucose residue by the glucosyltransferase, B3GALTL. Fucosylation mediates the efficient secretion of ADAMTS family members. Can also be C-glycosylated with one or two mannose molecules on tryptophan residues within the consensus sequence W-X-X-W of the TPRs, and N-glycosylated. These other glycosylations can also facilitate secretion.

Its subcellular location is the secreted. The protein resides in the extracellular space. It localises to the extracellular matrix. Metalloproteinase that plays an important role in connective tissue organization, development, inflammation and cell migration. Extracellular matrix (ECM) degrading enzyme that shows proteolytic activity toward the hyalectan group of chondroitin sulfate proteoglycans (CSPGs) including ACAN, VCAN, BCAN and NCAN. Cleavage within the hyalectans occurs at Glu-Xaa recognition motifs. Plays a role in embryonic development, including limb and cardiac morphogenesis, and skeletal muscle development through its VCAN remodeling properties. Cleaves VCAN in the pericellular matrix surrounding myoblasts, facilitating myoblast contact and fusion which is required for skeletal muscle development and regeneration. Participates in the development of brown adipose tissue and browning of white adipose tissue. Plays an important role for T-lymphocyte migration from draining lymph nodes following viral infection. In Bos taurus (Bovine), this protein is A disintegrin and metalloproteinase with thrombospondin motifs 5 (ADAMTS5).